The sequence spans 633 residues: Probable extracellular metalloproteinase 5 (633 aa).

The N-terminal stretch at 1-20 is a signal peptide; it reads MHGLLLAAAGLLSLPLHVLA. A propeptide spanning residues 21–244 is cleaved from the precursor; the sequence is HPQPSTNLAG…VHNVVDYVSH (224 aa). A glycan (N-linked (GlcNAc...) asparagine) is linked at N285. A Zn(2+)-binding site is contributed by H428. E429 is a catalytic residue. Zn(2+) is bound at residue H432. Residues N592 and N621 are each glycosylated (N-linked (GlcNAc...) asparagine).

This sequence belongs to the peptidase M36 family. The cofactor is Zn(2+).

Its subcellular location is the secreted. Secreted metalloproteinase probably acting as a virulence factor. The polypeptide is Probable extracellular metalloproteinase 5 (MEP5) (Trichophyton verrucosum (strain HKI 0517)).